Reading from the N-terminus, the 340-residue chain is Fructose-1,6-bisphosphatase class 1 (340 aa).

Positions 107, 126, 128, and 129 each coordinate Mg(2+). Position 215 (N215) interacts with substrate. Mg(2+) is bound at residue E287.

This sequence belongs to the FBPase class 1 family. In terms of assembly, homotetramer. It depends on Mg(2+) as a cofactor.

Its subcellular location is the cytoplasm. The catalysed reaction is beta-D-fructose 1,6-bisphosphate + H2O = beta-D-fructose 6-phosphate + phosphate. It participates in carbohydrate biosynthesis; gluconeogenesis. The protein is Fructose-1,6-bisphosphatase class 1 of Brucella suis (strain ATCC 23445 / NCTC 10510).